Consider the following 92-residue polypeptide: Small ribosomal subunit protein uS15c (92 aa).

The protein belongs to the universal ribosomal protein uS15 family. Part of the 30S ribosomal subunit.

The protein resides in the plastid. It localises to the chloroplast. The sequence is that of Small ribosomal subunit protein uS15c (rps15-A) from Lemna minor (Common duckweed).